A 258-amino-acid polypeptide reads, in one-letter code: Type III pantothenate kinase (258 aa).

Residue 6-13 (DVGNTNTV) participates in ATP binding. Residues tyrosine 100 and 107 to 110 (GADR) contribute to the substrate site. The Proton acceptor role is filled by aspartate 109. Aspartate 129 provides a ligand contact to K(+). Threonine 132 is an ATP binding site. A substrate-binding site is contributed by threonine 184.

Belongs to the type III pantothenate kinase family. In terms of assembly, homodimer. The cofactor is NH4(+). It depends on K(+) as a cofactor.

It is found in the cytoplasm. It carries out the reaction (R)-pantothenate + ATP = (R)-4'-phosphopantothenate + ADP + H(+). The protein operates within cofactor biosynthesis; coenzyme A biosynthesis; CoA from (R)-pantothenate: step 1/5. Its function is as follows. Catalyzes the phosphorylation of pantothenate (Pan), the first step in CoA biosynthesis. In Bacillus licheniformis (strain ATCC 14580 / DSM 13 / JCM 2505 / CCUG 7422 / NBRC 12200 / NCIMB 9375 / NCTC 10341 / NRRL NRS-1264 / Gibson 46), this protein is Type III pantothenate kinase.